The primary structure comprises 285 residues: Probable endonuclease 4 (285 aa).

Zn(2+)-binding residues include His-69, His-109, Glu-145, Asp-179, His-182, His-216, Asp-229, His-231, and Glu-261.

It belongs to the AP endonuclease 2 family. The cofactor is Zn(2+).

It carries out the reaction Endonucleolytic cleavage to 5'-phosphooligonucleotide end-products.. Functionally, endonuclease IV plays a role in DNA repair. It cleaves phosphodiester bonds at apurinic or apyrimidinic (AP) sites, generating a 3'-hydroxyl group and a 5'-terminal sugar phosphate. The chain is Probable endonuclease 4 from Enterobacter sp. (strain 638).